Consider the following 374-residue polypeptide: Histone acetyltransferase type B catalytic subunit (374 aa).

Interaction with histone H4 N-terminus stretches follow at residues 42-44 (DSE) and 194-196 (YKY). Residues 135-303 (VVYKSSLVDD…ESSRKSLKLE (169 aa)) form the N-acetyltransferase domain. An interaction with HAT2 region spans residues 197–205 (WHYLGAKSF). Residues 220 to 222 (FLI) and 227 to 233 (QNKGHGS) contribute to the acetyl-CoA site. Glu255 functions as the Proton donor/acceptor in the catalytic mechanism. Positions 258 and 267 each coordinate acetyl-CoA. Ser354 bears the Phosphoserine mark.

This sequence belongs to the HAT1 family. As to quaternary structure, component of the HAT-B complex composed of at least HAT1 and HAT2. In the cytoplasm, this complex binds to the histone H4 tail. In the nucleus, the HAT-B complex has an additional component, the histone H3/H4 chaperone HIF1.

The protein resides in the cytoplasm. It is found in the nucleus. The catalysed reaction is L-lysyl-[protein] + acetyl-CoA = N(6)-acetyl-L-lysyl-[protein] + CoA + H(+). Its function is as follows. Catalytic component of the histone acetylase B (HAT-B) complex. Acetylates 'Lys-12' of free histone H4 in the cytoplasm. The complex is also found in the nucleus, however it is not certain that it modifies histone H4 when packaged in chromatin. Histone H4 'Lys-12' acetylation is required for telomeric silencing. Has intrinsic substrate specificity that modifies lysine in recognition sequence GXGKXG. Involved in DNA double-strand break repair. This is Histone acetyltransferase type B catalytic subunit (HAT1) from Saccharomyces cerevisiae (strain ATCC 204508 / S288c) (Baker's yeast).